Consider the following 490-residue polypeptide: Glutamyl-tRNA(Gln) amidotransferase subunit A (490 aa).

Residues K81 and S156 each act as charge relay system in the active site. Catalysis depends on S180, which acts as the Acyl-ester intermediate.

This sequence belongs to the amidase family. GatA subfamily. In terms of assembly, heterotrimer of A, B and C subunits.

The enzyme catalyses L-glutamyl-tRNA(Gln) + L-glutamine + ATP + H2O = L-glutaminyl-tRNA(Gln) + L-glutamate + ADP + phosphate + H(+). Allows the formation of correctly charged Gln-tRNA(Gln) through the transamidation of misacylated Glu-tRNA(Gln) in organisms which lack glutaminyl-tRNA synthetase. The reaction takes place in the presence of glutamine and ATP through an activated gamma-phospho-Glu-tRNA(Gln). The polypeptide is Glutamyl-tRNA(Gln) amidotransferase subunit A (Nocardia farcinica (strain IFM 10152)).